A 121-amino-acid polypeptide reads, in one-letter code: Two-component response regulator ORR13 (121 aa).

The Response regulatory domain occupies 5 to 121; the sequence is HVLVVDDTHV…ADVPRILNYI (117 aa). D55 bears the 4-aspartylphosphate mark.

Belongs to the ARR family. Type-A subfamily. In terms of processing, two-component system major event consists of a His-to-Asp phosphorelay between a sensor histidine kinase (HK) and a response regulator (RR). In plants, the His-to-Asp phosphorelay involves an additional intermediate named Histidine-containing phosphotransfer protein (HPt). This multistep phosphorelay consists of a His-Asp-His-Asp sequential transfer of a phosphate group between first a His and an Asp of the HK protein, followed by the transfer to a conserved His of the HPt protein and finally the transfer to an Asp in the receiver domain of the RR protein. Expressed in flowers and panicles.

Functionally, functions as a response regulator involved in His-to-Asp phosphorelay signal transduction system. Phosphorylation of the Asp residue in the receiver domain activates the ability of the protein to promote the transcription of target genes. Type-A response regulators seem to act as negative regulators of the cytokinin signaling. The sequence is that of Two-component response regulator ORR13 from Oryza sativa subsp. japonica (Rice).